Reading from the N-terminus, the 377-residue chain is Endolytic peptidoglycan transglycosylase RlpA (377 aa).

Positions 1–19 (MHKQLPVICVAAGIVLLAA) are cleaved as a signal peptide. Residue Cys-20 is the site of N-palmitoyl cysteine attachment. A lipid anchor (S-diacylglycerol cysteine) is attached at Cys-20. A disordered region spans residues 196-277 (LPPRPDLSGG…PVSAPVTAPA (82 aa)). 2 stretches are compositionally biased toward low complexity: residues 208–218 (SASSAPAQPQG) and 264–277 (PQTA…TAPA). The 77-residue stretch at 300 to 376 (AAASGRFVVQ…AQLQSFIASA (77 aa)) folds into the SPOR domain.

It belongs to the RlpA family.

It is found in the cell membrane. Lytic transglycosylase with a strong preference for naked glycan strands that lack stem peptides. The chain is Endolytic peptidoglycan transglycosylase RlpA from Salmonella typhi.